The chain runs to 185 residues: Ribosome-recycling factor (185 aa).

Belongs to the RRF family.

It localises to the cytoplasm. In terms of biological role, responsible for the release of ribosomes from messenger RNA at the termination of protein biosynthesis. May increase the efficiency of translation by recycling ribosomes from one round of translation to another. The polypeptide is Ribosome-recycling factor (Streptococcus pyogenes serotype M28 (strain MGAS6180)).